A 569-amino-acid polypeptide reads, in one-letter code: Urease subunit alpha (569 aa).

The Urease domain maps to 131–569 (GSIDTHIHFI…VPMAQRYFLL (439 aa)). Residues H136, H138, and K219 each coordinate Ni(2+). N6-carboxylysine is present on K219. Position 221 (H221) interacts with substrate. Ni(2+) is bound by residues H248 and H274. H322 functions as the Proton donor in the catalytic mechanism. D362 contacts Ni(2+).

Belongs to the metallo-dependent hydrolases superfamily. Urease alpha subunit family. As to quaternary structure, heterotrimer of UreA (gamma), UreB (beta) and UreC (alpha) subunits. Three heterotrimers associate to form the active enzyme. It depends on Ni cation as a cofactor. Post-translationally, carboxylation allows a single lysine to coordinate two nickel ions.

It localises to the cytoplasm. It catalyses the reaction urea + 2 H2O + H(+) = hydrogencarbonate + 2 NH4(+). It functions in the pathway nitrogen metabolism; urea degradation; CO(2) and NH(3) from urea (urease route): step 1/1. This Prochlorococcus marinus (strain MIT 9215) protein is Urease subunit alpha.